The sequence spans 306 residues: uncharacterized protein (306 aa).

A coiled-coil region spans residues 277-306 (TEIIQNYKIANELKKEKQQNKKKNSIELEE).

This is an uncharacterized protein from Saccharolobus islandicus (Sulfolobus islandicus).